A 54-amino-acid polypeptide reads, in one-letter code: MSKLFIFFLLVALLAFVSSEAAECVAKGQNCIVGKSTCCIGQCIIKDHVLGSCE.

An N-terminal signal peptide occupies residues 1-21; the sequence is MSKLFIFFLLVALLAFVSSEA. 3 disulfides stabilise this stretch: Cys24-Cys39, Cys31-Cys43, and Cys38-Cys53.

Expressed by the venom duct.

Its subcellular location is the secreted. Functionally, this endoparasitoid wasp peptide has a role in disruption of the cellular host immune response, since it reduces the capacity of D.saccharalis hemocytes to encapsulate foreign bodies. On the other hand, it shows no effect on the humoral immune response, since it has no effect on phenoloxidase activity. This chain is H-bracotoxin-Cf4, found in Cotesia flavipes (Parasitic wasp).